A 199-amino-acid chain; its full sequence is MLDNLKKYKIVLGSQSPRRKELLSGLDIRFEQKAMPDIAEDYPAGLDPEKVPLYLARMKAEAYRSKGMMQDSTLLITADTVVIVDGAILGKPQDREEAARMLRTLSGRTHQVVTGVCISHRWETRAFSCSSLVTFAHLSDEEIDYYLERYRPYDKAGSYGIQEWIGYIAIQRVEGSFYNVMGLPVHLLYNELKDFGESN.

Asp79 acts as the Proton acceptor in catalysis.

It belongs to the Maf family. YhdE subfamily. It depends on a divalent metal cation as a cofactor.

The protein resides in the cytoplasm. The catalysed reaction is dTTP + H2O = dTMP + diphosphate + H(+). It carries out the reaction UTP + H2O = UMP + diphosphate + H(+). Functionally, nucleoside triphosphate pyrophosphatase that hydrolyzes dTTP and UTP. May have a dual role in cell division arrest and in preventing the incorporation of modified nucleotides into cellular nucleic acids. The sequence is that of dTTP/UTP pyrophosphatase from Porphyromonas gingivalis (strain ATCC 33277 / DSM 20709 / CIP 103683 / JCM 12257 / NCTC 11834 / 2561).